Here is a 337-residue protein sequence, read N- to C-terminus: Holliday junction branch migration complex subunit RuvB (337 aa).

The segment at 1-181 (MQRLVEIERF…FGMNFRMQFY (181 aa)) is large ATPase domain (RuvB-L). Residues L20, R21, G62, K65, T66, T67, 128-130 (EDF), R171, Y181, and R218 contribute to the ATP site. T66 contributes to the Mg(2+) binding site. Positions 182–252 (SPEELSKIIS…RAQYALDELG (71 aa)) are small ATPAse domain (RuvB-S). Positions 255 to 337 (SYGFDEMDIK…MPALDDGGLF (83 aa)) are head domain (RuvB-H). R309 and R314 together coordinate DNA.

The protein belongs to the RuvB family. Homohexamer. Forms an RuvA(8)-RuvB(12)-Holliday junction (HJ) complex. HJ DNA is sandwiched between 2 RuvA tetramers; dsDNA enters through RuvA and exits via RuvB. An RuvB hexamer assembles on each DNA strand where it exits the tetramer. Each RuvB hexamer is contacted by two RuvA subunits (via domain III) on 2 adjacent RuvB subunits; this complex drives branch migration. In the full resolvosome a probable DNA-RuvA(4)-RuvB(12)-RuvC(2) complex forms which resolves the HJ.

The protein resides in the cytoplasm. It carries out the reaction ATP + H2O = ADP + phosphate + H(+). The RuvA-RuvB-RuvC complex processes Holliday junction (HJ) DNA during genetic recombination and DNA repair, while the RuvA-RuvB complex plays an important role in the rescue of blocked DNA replication forks via replication fork reversal (RFR). RuvA specifically binds to HJ cruciform DNA, conferring on it an open structure. The RuvB hexamer acts as an ATP-dependent pump, pulling dsDNA into and through the RuvAB complex. RuvB forms 2 homohexamers on either side of HJ DNA bound by 1 or 2 RuvA tetramers; 4 subunits per hexamer contact DNA at a time. Coordinated motions by a converter formed by DNA-disengaged RuvB subunits stimulates ATP hydrolysis and nucleotide exchange. Immobilization of the converter enables RuvB to convert the ATP-contained energy into a lever motion, pulling 2 nucleotides of DNA out of the RuvA tetramer per ATP hydrolyzed, thus driving DNA branch migration. The RuvB motors rotate together with the DNA substrate, which together with the progressing nucleotide cycle form the mechanistic basis for DNA recombination by continuous HJ branch migration. Branch migration allows RuvC to scan DNA until it finds its consensus sequence, where it cleaves and resolves cruciform DNA. This chain is Holliday junction branch migration complex subunit RuvB, found in Sulfurimonas denitrificans (strain ATCC 33889 / DSM 1251) (Thiomicrospira denitrificans (strain ATCC 33889 / DSM 1251)).